We begin with the raw amino-acid sequence, 267 residues long: S-adenosylmethionine decarboxylase proenzyme (267 aa).

Ser-114 functions as the Schiff-base intermediate with substrate; via pyruvic acid in the catalytic mechanism. The residue at position 114 (Ser-114) is a Pyruvic acid (Ser); by autocatalysis. The active-site Proton acceptor; for processing activity is the His-119. Cys-142 acts as the Proton donor; for catalytic activity in catalysis.

Belongs to the prokaryotic AdoMetDC family. Type 2 subfamily. Heterooctamer of four alpha and four beta chains arranged as a tetramer of alpha/beta heterodimers. Pyruvate serves as cofactor. Post-translationally, is synthesized initially as an inactive proenzyme. Formation of the active enzyme involves a self-maturation process in which the active site pyruvoyl group is generated from an internal serine residue via an autocatalytic post-translational modification. Two non-identical subunits are generated from the proenzyme in this reaction, and the pyruvate is formed at the N-terminus of the alpha chain, which is derived from the carboxyl end of the proenzyme. The post-translation cleavage follows an unusual pathway, termed non-hydrolytic serinolysis, in which the side chain hydroxyl group of the serine supplies its oxygen atom to form the C-terminus of the beta chain, while the remainder of the serine residue undergoes an oxidative deamination to produce ammonia and the pyruvoyl group blocking the N-terminus of the alpha chain.

It carries out the reaction S-adenosyl-L-methionine + H(+) = S-adenosyl 3-(methylsulfanyl)propylamine + CO2. The protein operates within amine and polyamine biosynthesis; S-adenosylmethioninamine biosynthesis; S-adenosylmethioninamine from S-adenosyl-L-methionine: step 1/1. Catalyzes the decarboxylation of S-adenosylmethionine to S-adenosylmethioninamine (dcAdoMet), the propylamine donor required for the synthesis of the polyamines spermine and spermidine from the diamine putrescine. The protein is S-adenosylmethionine decarboxylase proenzyme of Erwinia tasmaniensis (strain DSM 17950 / CFBP 7177 / CIP 109463 / NCPPB 4357 / Et1/99).